A 388-amino-acid chain; its full sequence is MKHLHRFFSSDASGGIILIIAAALAMLMANMGATSGWYHDFLETPVQLRVGALEINKNMLLWINDALMAVFFLLIGLEVKRELMQGSLASLRQAAFPVIAAIGGMIVPALLYLAFNYSDPVTREGWAIPAATDIAFALGVLALLGSRVPLALKIFLMALAIIDDLGAIIIIALFYTSDLSIVSLGVAAFAIAVLALLNLCGVRRTGVYILVGAVLWTAVLKSGVHATLAGVIVGFFIPLKEKHGRSPAKRLEHVLHPWVAYLILPLFAFANAGVSLQGVTMDGLTSMLPLGIIAGLLIGKPLGISLFCWLALRFKLAHLPQGTTYQQIMAVGILCGIGFTMSIFIASLAFGNIDPELINWAKLGILIGSLLSAVVGYSWLRARLNAPA.

Transmembrane regions (helical) follow at residues 14–34 (GGIILIIAAALAMLMANMGAT), 59–79 (MLLWINDALMAVFFLLIGLEV), 95–115 (AFPVIAAIGGMIVPALLYLAF), 125–145 (GWAIPAATDIAFALGVLALLG), 154–174 (IFLMALAIIDDLGAIIIIALF), 179–199 (LSIVSLGVAAFAIAVLALLNL), 219–239 (VLKSGVHATLAGVIVGFFIPL), 254–274 (VLHPWVAYLILPLFAFANAGV), 292–312 (IIAGLLIGKPLGISLFCWLAL), 328–348 (IMAVGILCGIGFTMSIFIASL), and 360–380 (WAKLGILIGSLLSAVVGYSWL).

It belongs to the NhaA Na(+)/H(+) (TC 2.A.33) antiporter family.

It is found in the cell inner membrane. The catalysed reaction is Na(+)(in) + 2 H(+)(out) = Na(+)(out) + 2 H(+)(in). Functionally, na(+)/H(+) antiporter that extrudes sodium in exchange for external protons. The sequence is that of Na(+)/H(+) antiporter NhaA from Salmonella paratyphi A (strain ATCC 9150 / SARB42).